The following is a 162-amino-acid chain: Cytochrome c-type biogenesis protein CcmE (162 aa).

Residues 1–7 (MTRKQRR) are Cytoplasmic-facing. The chain crosses the membrane as a helical; Signal-anchor for type II membrane protein span at residues 8–28 (LTMIGGALVVLGIAAALVLNA). Residues 29 to 162 (LRDSIVFFST…EASSKQEVSQ (134 aa)) lie on the Periplasmic side of the membrane. Residues His-122 and Tyr-126 each coordinate heme. Residues 140–162 (HWKDDYGAQPGAAEASSKQEVSQ) are disordered.

The protein belongs to the CcmE/CycJ family.

It localises to the cell inner membrane. In terms of biological role, heme chaperone required for the biogenesis of c-type cytochromes. Transiently binds heme delivered by CcmC and transfers the heme to apo-cytochromes in a process facilitated by CcmF and CcmH. The sequence is that of Cytochrome c-type biogenesis protein CcmE from Nitrobacter winogradskyi (strain ATCC 25391 / DSM 10237 / CIP 104748 / NCIMB 11846 / Nb-255).